The chain runs to 360 residues: Phospho-N-acetylmuramoyl-pentapeptide-transferase (360 aa).

The next 10 helical transmembrane spans lie at 24–44, 69–89, 92–112, 133–153, 158–178, 199–219, 239–259, 263–283, 288–308, and 337–357; these read RAVM…PWTI, GTPT…TLLW, WANP…ALGF, MVWQ…LAAN, ILIV…GFLV, GLAT…AYAS, VVIF…FNAY, VFMG…VAVI, FVLV…MLQV, and QVVV…LSTL.

The protein belongs to the glycosyltransferase 4 family. MraY subfamily. It depends on Mg(2+) as a cofactor.

The protein localises to the cell inner membrane. The catalysed reaction is UDP-N-acetyl-alpha-D-muramoyl-L-alanyl-gamma-D-glutamyl-meso-2,6-diaminopimeloyl-D-alanyl-D-alanine + di-trans,octa-cis-undecaprenyl phosphate = di-trans,octa-cis-undecaprenyl diphospho-N-acetyl-alpha-D-muramoyl-L-alanyl-D-glutamyl-meso-2,6-diaminopimeloyl-D-alanyl-D-alanine + UMP. Its pathway is cell wall biogenesis; peptidoglycan biosynthesis. Its function is as follows. Catalyzes the initial step of the lipid cycle reactions in the biosynthesis of the cell wall peptidoglycan: transfers peptidoglycan precursor phospho-MurNAc-pentapeptide from UDP-MurNAc-pentapeptide onto the lipid carrier undecaprenyl phosphate, yielding undecaprenyl-pyrophosphoryl-MurNAc-pentapeptide, known as lipid I. The sequence is that of Phospho-N-acetylmuramoyl-pentapeptide-transferase from Neisseria meningitidis serogroup A / serotype 4A (strain DSM 15465 / Z2491).